Reading from the N-terminus, the 365-residue chain is Aminomethyltransferase (365 aa).

The protein belongs to the GcvT family. The glycine cleavage system is composed of four proteins: P, T, L and H.

The catalysed reaction is N(6)-[(R)-S(8)-aminomethyldihydrolipoyl]-L-lysyl-[protein] + (6S)-5,6,7,8-tetrahydrofolate = N(6)-[(R)-dihydrolipoyl]-L-lysyl-[protein] + (6R)-5,10-methylene-5,6,7,8-tetrahydrofolate + NH4(+). The glycine cleavage system catalyzes the degradation of glycine. This Parafrankia sp. (strain EAN1pec) protein is Aminomethyltransferase.